Here is a 1109-residue protein sequence, read N- to C-terminus: MGRRNSYFPGNFVPLFFVFIVLILQQERVICQEDRSLDNPAANRLYNQFVFDKISNLTEVFEDDIKRELGFCITNVKEDYNEAFNFSTKPDFLNACGKTTKGDMMQRICTAAEVRIYFNGLLGGAKRATNYLKPNKNCNLSSWMSGCEPGWACRTAKDVKVDLKDDKNVPVRTQQCAPCCAGFFCPRGITCMIPCPLGAYCPEANLNRTTGLCDPYHYQLPSGQPNHTCGGADIWADIGSSSEVFCSAGSFCPSTIDKLPCTKGHYCRTGSTAELNCFKLATCNPRSTNQNITAYGIMLFAGLGFLLIILYNCSDQVLATRERRQAKSREKAVQSVRDSQSREKWKSAKDIAKKHATELQQSFSRTFSRRKSMKQPDLMRGLSQAKPGSDAALPPMLGSSSDTKKGKKKEKNKLTEMLHDIEQNPEDPEGFNLEIGDKNIKKHAPKGKALHTQSQMFRYAYGQIEKEKAMQEQNKNLTFSGVISMANDIDIRKRPMIEVAFKDLSITLKGKNKHLMRCVTGKLSPGRVSAVMGPSGAGKTTFLTALTGKAPGCIMTGMILVNGKVESIQSYKKIIGFVPQDDIVHGNLTVEENLWFSARCRLPADLPKPEKVLVVERVIESLGLQHVRDSLVGTVEKRGISGGQRKRVNVGLEMVMEPSLLILDEPTSGLDSSSSQLLLRALRREALEGVNICMVVHQPSYTLFRMFDDLILLAKGGLICYQGPVKKVEEYFSSLGIVVPERVNPPDYYIDILEGILKPSTSSGVTYKQLPVRWMLHNGYPVPMDMLKSIEGMASSASGENSAHGGSAHGSVVGDDGTSFAGEFWQDVKANVEIKKDNLQNNFSSSGDLSEREVPGVYQQYRYFLGRLGKQRLREARTLAVDYLILLLAGICLGTLAKVSDETFGAMGYTYTVIAVSLLCKITALRSFSLDKLHYWRESRAGMSSLAYFLAKDTVDHFNTIVKPLVYLSMFYFFNNPRSTVTDNYVVLICLVYCVTGIAYTLAILFEPGPAQLWSVLLPVVLTLIATSTNDNKIVDSISELCYTRWALEAFVVSNAQRYKGVWLITRCGSLMENGYNIKHFPRCLVFLTLTGILSRCAAFFCMVTFQKK.

Transmembrane regions (helical) follow at residues 5–25 and 291–311; these read NSYF…LILQ and NITA…IILY. The tract at residues 325 to 411 is disordered; the sequence is QAKSREKAVQ…DTKKGKKKEK (87 aa). Residues 339-357 show a composition bias toward basic and acidic residues; it reads SQSREKWKSAKDIAKKHAT. An ABC transporter domain is found at 499–741; that stretch reads VAFKDLSITL…FSSLGIVVPE (243 aa). 533-540 is an ATP binding site; that stretch reads GPSGAGKT. Residues 859 to 1056 enclose the ABC transmembrane type-2 domain; sequence QQYRYFLGRL…ALEAFVVSNA (198 aa). 6 helical membrane-spanning segments follow: residues 879–899, 904–924, 954–974, 986–1006, 1008–1028, and 1084–1104; these read LAVD…LAKV, FGAM…KITA, TVDH…FYFF, VVLI…AILF, PGPA…IATS, and CLVF…FCMV.

It belongs to the ABC transporter superfamily. ABCG family. Eye pigment precursor importer (TC 3.A.1.204) subfamily.

It localises to the membrane. The polypeptide is ABC transporter G family member 28 (ABCG28) (Arabidopsis thaliana (Mouse-ear cress)).